The primary structure comprises 113 residues: Putative anti-sigma factor antagonist TM1081 homolog (113 aa).

The STAS domain maps to M1–V110. A Phosphoserine modification is found at S55.

This sequence belongs to the anti-sigma-factor antagonist family. Phosphorylated on a serine residue.

In the phosphorylated form it could act as an anti-anti-sigma factor that counteracts an anti-sigma factor and thus releases a sigma factor from inhibition. In Thermotoga neapolitana, this protein is Putative anti-sigma factor antagonist TM1081 homolog.